The primary structure comprises 217 residues: Ribonuclease T (217 aa).

Positions 20–195 (VVVDVETAGF…YDTEKTAELF (176 aa)) constitute an Exonuclease domain. Residues D23, E25, H182, and D187 each contribute to the Mg(2+) site. H182 functions as the Proton donor/acceptor in the catalytic mechanism.

Belongs to the RNase T family. As to quaternary structure, homodimer. It depends on Mg(2+) as a cofactor.

Functionally, trims short 3' overhangs of a variety of RNA species, leaving a one or two nucleotide 3' overhang. Responsible for the end-turnover of tRNA: specifically removes the terminal AMP residue from uncharged tRNA (tRNA-C-C-A). Also appears to be involved in tRNA biosynthesis. The sequence is that of Ribonuclease T from Vibrio vulnificus (strain CMCP6).